The chain runs to 424 residues: CinA-like protein (424 aa).

It belongs to the CinA family.

The protein is CinA-like protein of Shewanella loihica (strain ATCC BAA-1088 / PV-4).